The chain runs to 89 residues: Small ribosomal subunit protein uS15 (89 aa).

This sequence belongs to the universal ribosomal protein uS15 family. As to quaternary structure, part of the 30S ribosomal subunit. Forms a bridge to the 50S subunit in the 70S ribosome, contacting the 23S rRNA.

One of the primary rRNA binding proteins, it binds directly to 16S rRNA where it helps nucleate assembly of the platform of the 30S subunit by binding and bridging several RNA helices of the 16S rRNA. Functionally, forms an intersubunit bridge (bridge B4) with the 23S rRNA of the 50S subunit in the ribosome. This is Small ribosomal subunit protein uS15 from Bartonella henselae (strain ATCC 49882 / DSM 28221 / CCUG 30454 / Houston 1) (Rochalimaea henselae).